A 167-amino-acid polypeptide reads, in one-letter code: Mitochondrial inner membrane protease subunit 1 (167 aa).

Active-site residues include Ser-40 and Lys-83.

Belongs to the peptidase S26 family. IMP1 subfamily. As to quaternary structure, heterodimer of 2 subunits, IMMPL1 and IMMPL2.

It localises to the mitochondrion inner membrane. Functionally, catalyzes the removal of transit peptides required for the targeting of proteins from the mitochondrial matrix, across the inner membrane, into the inter-membrane space. The protein is Mitochondrial inner membrane protease subunit 1 (immp1l) of Xenopus tropicalis (Western clawed frog).